We begin with the raw amino-acid sequence, 192 residues long: Ion-translocating oxidoreductase complex subunit A (192 aa).

6 consecutive transmembrane segments (helical) span residues Ile5–Leu25, Ile39–Val59, Leu67–Phe87, Leu102–Leu122, Ile134–Met154, and Ser171–Val191.

The protein belongs to the NqrDE/RnfAE family. As to quaternary structure, the complex is composed of six subunits: RnfA, RnfB, RnfC, RnfD, RnfE and RnfG.

The protein resides in the cell inner membrane. Part of a membrane-bound complex that couples electron transfer with translocation of ions across the membrane. This Vibrio campbellii (strain ATCC BAA-1116) protein is Ion-translocating oxidoreductase complex subunit A.